We begin with the raw amino-acid sequence, 262 residues long: Tryptophan synthase alpha chain (262 aa).

Catalysis depends on proton acceptor residues glutamate 47 and aspartate 58.

The protein belongs to the TrpA family. In terms of assembly, tetramer of two alpha and two beta chains.

The enzyme catalyses (1S,2R)-1-C-(indol-3-yl)glycerol 3-phosphate + L-serine = D-glyceraldehyde 3-phosphate + L-tryptophan + H2O. Its pathway is amino-acid biosynthesis; L-tryptophan biosynthesis; L-tryptophan from chorismate: step 5/5. Its function is as follows. The alpha subunit is responsible for the aldol cleavage of indoleglycerol phosphate to indole and glyceraldehyde 3-phosphate. The sequence is that of Tryptophan synthase alpha chain from Chromobacterium violaceum (strain ATCC 12472 / DSM 30191 / JCM 1249 / CCUG 213 / NBRC 12614 / NCIMB 9131 / NCTC 9757 / MK).